Consider the following 518-residue polypeptide: Nicotine N-demethylase CYP82E3 (518 aa).

Residues 2–22 (VFPVEAIVGLVTFTFLFYFLW) traverse the membrane as a helical segment. Lys254 is covalently cross-linked (Glycyl lysine isopeptide (Lys-Gly) (interchain with G-Cter in ubiquitin)). Residue Cys458 participates in heme binding.

It belongs to the cytochrome P450 family. CYP82E2 subfamily. Heme is required as a cofactor. As to expression, expressed in leaves.

Its subcellular location is the membrane. The catalysed reaction is (S)-nicotine + reduced [NADPH--hemoprotein reductase] + O2 = (S)-nornicotine + formaldehyde + oxidized [NADPH--hemoprotein reductase] + H2O + H(+). Its pathway is alkaloid biosynthesis; nicotine biosynthesis. Involved in the biosynthesis of pyridine alkaloid natural products, leading mainly to the production of anabasine, anatabine, nicotine and nornicotine, effective deterrents against herbivores with antiparasitic and pesticide properties (neurotoxins); nornicotine serves as the precursor in the synthesis of the carcinogen compound N'-nitrosonornicotine (NNN). Catalyzes the demethylation of nicotine to form nornicotine. This is Nicotine N-demethylase CYP82E3 from Nicotiana tomentosiformis (Tobacco).